A 210-amino-acid polypeptide reads, in one-letter code: ATP phosphoribosyltransferase (210 aa).

It belongs to the ATP phosphoribosyltransferase family. Short subfamily. As to quaternary structure, heteromultimer composed of HisG and HisZ subunits.

It is found in the cytoplasm. The catalysed reaction is 1-(5-phospho-beta-D-ribosyl)-ATP + diphosphate = 5-phospho-alpha-D-ribose 1-diphosphate + ATP. Its pathway is amino-acid biosynthesis; L-histidine biosynthesis; L-histidine from 5-phospho-alpha-D-ribose 1-diphosphate: step 1/9. Catalyzes the condensation of ATP and 5-phosphoribose 1-diphosphate to form N'-(5'-phosphoribosyl)-ATP (PR-ATP). Has a crucial role in the pathway because the rate of histidine biosynthesis seems to be controlled primarily by regulation of HisG enzymatic activity. This chain is ATP phosphoribosyltransferase, found in Picosynechococcus sp. (strain ATCC 27264 / PCC 7002 / PR-6) (Agmenellum quadruplicatum).